The chain runs to 136 residues: MARTKQTARKSTGGKAPRKQLATKAARKSAPSTGGVKKPHRYRPGTVALREIRRYQKSTELLIRKLPFQRLVREIAQDFKTDLRFQSAAIGALQEAAEAYLVGLFEDTNLCAIHAKRVTIMPKDIQLARRIRGERA.

Residues 1-43 (MARTKQTARKSTGGKAPRKQLATKAARKSAPSTGGVKKPHRYR) are disordered. N6,N6,N6-trimethyllysine; alternate is present on K5. The residue at position 5 (K5) is an N6,N6-dimethyllysine; alternate. N6-methyllysine; alternate occurs at positions 5 and 10. K10 bears the N6-acetyllysine; alternate mark. S11 is modified (phosphoserine). At K15 the chain carries N6,N6-dimethyllysine; alternate. K15, K19, K24, K28, and K37 each carry N6-acetyllysine; alternate. N6-methyllysine; alternate is present on residues K19, K24, K28, and K37. 2 positions are modified to N6,N6,N6-trimethyllysine; alternate: K28 and K37. N6,N6-dimethyllysine; alternate occurs at positions 28 and 37. Residues K57 and K65 each carry the N6-acetyllysine modification. N6,N6,N6-trimethyllysine; alternate is present on K80. K80 is modified (N6,N6-dimethyllysine; alternate). Position 80 is an N6-methyllysine; alternate (K80).

The protein belongs to the histone H3 family. In terms of assembly, the nucleosome is a histone octamer containing two molecules each of H2A, H2B, H3 and H4 assembled in one H3-H4 heterotetramer and two H2A-H2B heterodimers. The octamer wraps approximately 147 bp of DNA. In terms of processing, phosphorylated at Ser-11. This is required for transcriptional activation through TBP recruitment to the promoters. Phosphorylation at Ser-11 also promotes subsequent acetylation at Lys-15. Mono-, di- and trimethylation of Lys-5 by the COMPASS complex activates gene expression by regulating transcription elongation and plays a role in telomere length maintenance. Lys-5 methylation enrichment correlates with transcription levels, and occurs in a 5' to 3' gradient with tri-methyl enrichment at the 5'-end of genes, shifting to di-methyl and then mono-methyl. The COMPASS mediated di and trimethylation of Lys-5 requires histone H2B monoubiquitination. Methylation of Lys-37 by SET2 represses gene expression. Methylation of Lys-80 by DOT1 is required for association of SIR proteins with telomeric regions and for telomeric silencing. Post-translationally, acetylation of histone H3 leads to transcriptional activation. Acetylation at Lys-15 is promoted by the phosphorylation at Ser-11. Acetylation at Lys-57 occurs predominantly in newly synthesized H3 molecule during G1, S and G2/M of the cell cycle and may be involved in DNA repair.

It is found in the nucleus. The protein localises to the chromosome. Core component of nucleosome. Nucleosomes wrap and compact DNA into chromatin, limiting DNA accessibility to the cellular machineries which require DNA as a template. Histones thereby play a central role in transcription regulation, DNA repair, DNA replication and chromosomal stability. DNA accessibility is regulated via a complex set of post-translational modifications of histones, also called histone code, and nucleosome remodeling. This chain is Histone H3.3 (HHT3), found in Trichinella pseudospiralis (Parasitic roundworm).